The sequence spans 342 residues: N-acetyl-gamma-glutamyl-phosphate reductase (342 aa).

Cysteine 147 is a catalytic residue.

Belongs to the NAGSA dehydrogenase family. Type 1 subfamily.

It is found in the cytoplasm. It carries out the reaction N-acetyl-L-glutamate 5-semialdehyde + phosphate + NADP(+) = N-acetyl-L-glutamyl 5-phosphate + NADPH + H(+). Its pathway is amino-acid biosynthesis; L-arginine biosynthesis; N(2)-acetyl-L-ornithine from L-glutamate: step 3/4. Functionally, catalyzes the NADPH-dependent reduction of N-acetyl-5-glutamyl phosphate to yield N-acetyl-L-glutamate 5-semialdehyde. The sequence is that of N-acetyl-gamma-glutamyl-phosphate reductase from Methanosphaera stadtmanae (strain ATCC 43021 / DSM 3091 / JCM 11832 / MCB-3).